The following is a 332-amino-acid chain: Long form salivary protein D7L2 (332 aa).

The N-terminal stretch at 1–21 (MFPPRKFLLSSFILAALHVTA) is a signal peptide. Cystine bridges form between C40/C77 and C73/C133. W61 provides a ligand contact to leukotriene E4. G157 and K176 together coordinate leukotriene E4. Intrachain disulfides connect C184–C219, C200–C331, and C259–C278. Noradrenaline contacts are provided by E185, R203, and H216. Positions 294 and 297 each coordinate noradrenaline.

Belongs to the PBP/GOBP family. In terms of assembly, interacts with human CD4. As to expression, saliva (at protein level). Female salivary gland (at protein level). Detected in the head and thorax of the female mosquitoes, where the salivary glands are located.

The protein resides in the secreted. Its function is as follows. Modulates blood feeding of female mosquitoes on vertebrate species by binding and sequestering different mediators involved in the host response, such as biogenic amines and eicosanoids. Binds serotonin, histamine, tryptamine, noradrenaline, leukotriene B4, leukotriene C4, leukotriene D4, leukotriene E4 and U-46619, a stable analog of thromboxane A2. Does not bind adrenaline. Exhibits vasodilating activity. Inhibits agonist-induced platelet aggregation but not blood clotting. In terms of biological role, (Microbial infection) Probably promotes Plasmodium gallinaceum oocyst development in mosquito midgut. The chain is Long form salivary protein D7L2 from Aedes aegypti (Yellowfever mosquito).